The primary structure comprises 257 residues: Trans-aconitate 2-methyltransferase (257 aa).

Belongs to the methyltransferase superfamily. Tam family.

The protein localises to the cytoplasm. The enzyme catalyses trans-aconitate + S-adenosyl-L-methionine = (E)-3-(methoxycarbonyl)pent-2-enedioate + S-adenosyl-L-homocysteine. Functionally, catalyzes the S-adenosylmethionine monomethyl esterification of trans-aconitate. The polypeptide is Trans-aconitate 2-methyltransferase (Rhizobium meliloti (strain 1021) (Ensifer meliloti)).